The chain runs to 208 residues: Large ribosomal subunit protein bL25 (208 aa).

Residues 1 to 20 are disordered; the sequence is MANHQIKAQRRKDEGKGASR.

The protein belongs to the bacterial ribosomal protein bL25 family. CTC subfamily. In terms of assembly, part of the 50S ribosomal subunit; part of the 5S rRNA/L5/L18/L25 subcomplex. Contacts the 5S rRNA. Binds to the 5S rRNA independently of L5 and L18.

In terms of biological role, this is one of the proteins that binds to the 5S RNA in the ribosome where it forms part of the central protuberance. This Xylella fastidiosa (strain 9a5c) protein is Large ribosomal subunit protein bL25.